The chain runs to 60 residues: Single-pass membrane and coiled-coil domain-containing protein 4 homolog (60 aa).

Residues 1–23 (MRKLRGGQTKETRKQRQERKEEN) form a disordered region. Residues 8–23 (QTKETRKQRQERKEEN) show a composition bias toward basic and acidic residues. A coiled-coil region spans residues 8–33 (QTKETRKQRQERKEENLKIQQQMKTI). A helical transmembrane segment spans residues 31-51 (KTIVLPTIGVIFLCIVVYVFL).

It belongs to the SMCO4 family.

The protein resides in the membrane. This chain is Single-pass membrane and coiled-coil domain-containing protein 4 homolog, found in Anopheles gambiae (African malaria mosquito).